The primary structure comprises 250 residues: 3-deoxy-manno-octulosonate cytidylyltransferase (250 aa).

The protein belongs to the KdsB family.

The protein localises to the cytoplasm. The enzyme catalyses 3-deoxy-alpha-D-manno-oct-2-ulosonate + CTP = CMP-3-deoxy-beta-D-manno-octulosonate + diphosphate. It participates in nucleotide-sugar biosynthesis; CMP-3-deoxy-D-manno-octulosonate biosynthesis; CMP-3-deoxy-D-manno-octulosonate from 3-deoxy-D-manno-octulosonate and CTP: step 1/1. It functions in the pathway bacterial outer membrane biogenesis; lipopolysaccharide biosynthesis. Its function is as follows. Activates KDO (a required 8-carbon sugar) for incorporation into bacterial lipopolysaccharide in Gram-negative bacteria. The chain is 3-deoxy-manno-octulosonate cytidylyltransferase from Geobacter sulfurreducens (strain ATCC 51573 / DSM 12127 / PCA).